Here is a 276-residue protein sequence, read N- to C-terminus: Dermonecrotic toxin LlSicTox-alphaIV2ii (276 aa).

Residue histidine 5 is part of the active site. Residues glutamate 25 and aspartate 27 each contribute to the Mg(2+) site. Histidine 41 acts as the Nucleophile in catalysis. 2 disulfides stabilise this stretch: cysteine 45/cysteine 51 and cysteine 47/cysteine 193. Aspartate 85 contributes to the Mg(2+) binding site.

This sequence belongs to the arthropod phospholipase D family. Class II subfamily. Requires Mg(2+) as cofactor. As to expression, expressed by the venom gland.

Its subcellular location is the secreted. The enzyme catalyses an N-(acyl)-sphingosylphosphocholine = an N-(acyl)-sphingosyl-1,3-cyclic phosphate + choline. The catalysed reaction is an N-(acyl)-sphingosylphosphoethanolamine = an N-(acyl)-sphingosyl-1,3-cyclic phosphate + ethanolamine. It catalyses the reaction a 1-acyl-sn-glycero-3-phosphocholine = a 1-acyl-sn-glycero-2,3-cyclic phosphate + choline. It carries out the reaction a 1-acyl-sn-glycero-3-phosphoethanolamine = a 1-acyl-sn-glycero-2,3-cyclic phosphate + ethanolamine. Dermonecrotic toxins cleave the phosphodiester linkage between the phosphate and headgroup of certain phospholipids (sphingolipid and lysolipid substrates), forming an alcohol (often choline) and a cyclic phosphate. This toxin acts on sphingomyelin (SM). It may also act on ceramide phosphoethanolamine (CPE), lysophosphatidylcholine (LPC) and lysophosphatidylethanolamine (LPE), but not on lysophosphatidylserine (LPS), and lysophosphatidylglycerol (LPG). It acts by transphosphatidylation, releasing exclusively cyclic phosphate products as second products. Induces dermonecrosis, hemolysis, increased vascular permeability, edema, inflammatory response, and platelet aggregation. The chain is Dermonecrotic toxin LlSicTox-alphaIV2ii from Loxosceles laeta (South American recluse spider).